Here is a 144-residue protein sequence, read N- to C-terminus: Large ribosomal subunit protein uL15 (144 aa).

The segment at 1 to 52 (MRLNTLSPAEGAKHAPKRVGRGIGSGLGKTGGRGHKGQKSRSGGGVRRGFEG) is disordered. A compositionally biased stretch (gly residues) spans 21–31 (RGIGSGLGKTG).

This sequence belongs to the universal ribosomal protein uL15 family. As to quaternary structure, part of the 50S ribosomal subunit.

Functionally, binds to the 23S rRNA. The polypeptide is Large ribosomal subunit protein uL15 (Buchnera aphidicola subsp. Acyrthosiphon kondoi (Acyrthosiphon kondoi symbiotic bacterium)).